The sequence spans 680 residues: Translation factor GUF1 homolog, chloroplastic (680 aa).

The transit peptide at 1–51 directs the protein to the chloroplast; sequence MATATASRLAVPAPRTSPQAPGRRRPAAPLPSAPPRPRALSAAPRGRVVCP. The disordered stretch occupies residues 1–68; sequence MATATASRLA…ASTTDAGQDR (68 aa). Over residues 28–37 the composition is skewed to pro residues; it reads APLPSAPPRP. Positions 38–60 are enriched in low complexity; the sequence is RALSAAPRGRVVCPAAPASSPAS. The tr-type G domain maps to 75–256; that stretch reads SNIRNFSIIA…AIVTKIPPPQ (182 aa). GTP is bound by residues 84–91, 149–153, and 203–206; these read AHIDHGKS, DTPGH, and NKID.

Belongs to the TRAFAC class translation factor GTPase superfamily. Classic translation factor GTPase family. LepA subfamily.

The protein localises to the plastid. It localises to the chloroplast. The enzyme catalyses GTP + H2O = GDP + phosphate + H(+). In terms of biological role, promotes chloroplast protein synthesis. May act as a fidelity factor of the translation reaction, by catalyzing a one-codon backward translocation of tRNAs on improperly translocated ribosomes. The protein is Translation factor GUF1 homolog, chloroplastic of Oryza sativa subsp. japonica (Rice).